Reading from the N-terminus, the 477-residue chain is Bifunctional protein HldE (477 aa).

Residues 1 to 318 (MKVNLPAFER…ENAVRGRADT (318 aa)) are ribokinase. Position 195 to 198 (195 to 198 (NLSE)) interacts with ATP. Residue Asp-264 is part of the active site. The cytidylyltransferase stretch occupies residues 344–477 (MTNGVFDILH…IKKIQTESEK (134 aa)).

The protein in the N-terminal section; belongs to the carbohydrate kinase PfkB family. It in the C-terminal section; belongs to the cytidylyltransferase family. Homodimer.

The enzyme catalyses D-glycero-beta-D-manno-heptose 7-phosphate + ATP = D-glycero-beta-D-manno-heptose 1,7-bisphosphate + ADP + H(+). It carries out the reaction D-glycero-beta-D-manno-heptose 1-phosphate + ATP + H(+) = ADP-D-glycero-beta-D-manno-heptose + diphosphate. It participates in nucleotide-sugar biosynthesis; ADP-L-glycero-beta-D-manno-heptose biosynthesis; ADP-L-glycero-beta-D-manno-heptose from D-glycero-beta-D-manno-heptose 7-phosphate: step 1/4. The protein operates within nucleotide-sugar biosynthesis; ADP-L-glycero-beta-D-manno-heptose biosynthesis; ADP-L-glycero-beta-D-manno-heptose from D-glycero-beta-D-manno-heptose 7-phosphate: step 3/4. Catalyzes the phosphorylation of D-glycero-D-manno-heptose 7-phosphate at the C-1 position to selectively form D-glycero-beta-D-manno-heptose-1,7-bisphosphate. Its function is as follows. Catalyzes the ADP transfer from ATP to D-glycero-beta-D-manno-heptose 1-phosphate, yielding ADP-D-glycero-beta-D-manno-heptose. The protein is Bifunctional protein HldE of Salmonella enteritidis PT4 (strain P125109).